The sequence spans 135 residues: Large ribosomal subunit protein uL22 (135 aa).

This sequence belongs to the universal ribosomal protein uL22 family. As to quaternary structure, part of the 50S ribosomal subunit.

This protein binds specifically to 23S rRNA; its binding is stimulated by other ribosomal proteins, e.g. L4, L17, and L20. It is important during the early stages of 50S assembly. It makes multiple contacts with different domains of the 23S rRNA in the assembled 50S subunit and ribosome. In terms of biological role, the globular domain of the protein is located near the polypeptide exit tunnel on the outside of the subunit, while an extended beta-hairpin is found that lines the wall of the exit tunnel in the center of the 70S ribosome. The sequence is that of Large ribosomal subunit protein uL22 from Christiangramia forsetii (strain DSM 17595 / CGMCC 1.15422 / KT0803) (Gramella forsetii).